A 258-amino-acid chain; its full sequence is TLC domain-containing protein 4-A (258 aa).

The next 6 helical transmembrane spans lie at 5–25, 52–72, 85–105, 116–132, 171–191, and 212–232; these read LISYCVVTGSFLGFQLLFSAI, FVSTNHALIVGSACLYILAYD, FWVKMNVAITCGYLVQDLLLL, YMVCHHLAVFYSYGYVL, PVLLNGLAMALVFFIVRIAVI, and IGPQVAWIVSCVVLDILNVFW. The TLC domain occupies 43-245; it reads GKQCEWDSRF…IARGFYKVVK (203 aa).

This sequence belongs to the TLCD4 family.

It localises to the membrane. The polypeptide is TLC domain-containing protein 4-A (tlcd4-a) (Xenopus laevis (African clawed frog)).